We begin with the raw amino-acid sequence, 434 residues long: Alpha-enolase (434 aa).

Serine 40 contacts Mg(2+). Histidine 158 and glutamate 167 together coordinate substrate. The active-site Proton donor is glutamate 210. Aspartate 245, glutamate 293, and aspartate 318 together coordinate Mg(2+). Substrate is bound by residues glutamate 293 and aspartate 318. Catalysis depends on lysine 343, which acts as the Proton acceptor. Substrate is bound by residues 370–373 (SHRS) and lysine 394.

It belongs to the enolase family. In terms of assembly, homodimer. Requires Mg(2+) as cofactor.

It localises to the cytoplasm. It carries out the reaction (2R)-2-phosphoglycerate = phosphoenolpyruvate + H2O. It participates in carbohydrate degradation; glycolysis; pyruvate from D-glyceraldehyde 3-phosphate: step 4/5. The polypeptide is Alpha-enolase (ENO1) (Gallus gallus (Chicken)).